Reading from the N-terminus, the 275-residue chain is Methylglyoxal reductase DkgA (275 aa).

Tyr51 functions as the Proton donor in the catalytic mechanism. A substrate-binding site is contributed by His107. 187-241 serves as a coordination point for NADP(+); it reads SPLAQGGKGVFDQKVIRDLADKYGKTPAQIVIRWHLDSGLVVIPKSVTPSRIAEN.

Belongs to the aldo/keto reductase family. In terms of assembly, monomer.

It is found in the cytoplasm. It carries out the reaction hydroxyacetone + NADP(+) = methylglyoxal + NADPH + H(+). Functionally, aldo-keto reductase that significantly contributes to cellular methylglyoxal detoxification by catalyzing the NADPH-dependent conversion of methylglyoxal to acetol. In Escherichia coli O157:H7, this protein is Methylglyoxal reductase DkgA.